We begin with the raw amino-acid sequence, 133 residues long: Profilin (133 aa).

Belongs to the profilin family.

More likely to influence phosphoinositide metabolism than actin assembly. This chain is Profilin, found in Cowpox virus (strain GRI-90 / Grishak) (CPV).